An 80-amino-acid chain; its full sequence is Exodeoxyribonuclease 7 small subunit (80 aa).

This sequence belongs to the XseB family. In terms of assembly, heterooligomer composed of large and small subunits.

The protein resides in the cytoplasm. The enzyme catalyses Exonucleolytic cleavage in either 5'- to 3'- or 3'- to 5'-direction to yield nucleoside 5'-phosphates.. Its function is as follows. Bidirectionally degrades single-stranded DNA into large acid-insoluble oligonucleotides, which are then degraded further into small acid-soluble oligonucleotides. In Streptomyces avermitilis (strain ATCC 31267 / DSM 46492 / JCM 5070 / NBRC 14893 / NCIMB 12804 / NRRL 8165 / MA-4680), this protein is Exodeoxyribonuclease 7 small subunit.